We begin with the raw amino-acid sequence, 1479 residues long: MAKRSRGPGRRCLLALVLFCAWGTLAVVAQKPGAGCPSRCLCFRTTVRCMHLLLEAVPAVAPQTSILDLRFNRIREIQPGAFRRLRNLNTLLLNNNQIKRIPSGAFEDLENLKYLYLYKNEIQSIDRQAFKGLASLEQLYLHFNQIETLDPDSFQHLPKLERLFLHNNRITHLVPGTFNHLESMKRLRLDSNTLHCDCEILWLADLLKTYAESGNAQAAAICEYPRRIQGRSVATITPEELNCERPRITSEPQDADVTSGNTVYFTCRAEGNPKPEIIWLRNNNELSMKTDSRLNLLDDGTLMIQNTQETDQGIYQCMAKNVAGEVKTQEVTLRYFGSPARPTFVIQPQNTEVLVGESVTLECSATGHPPPRISWTRGDRTPLPVDPRVNITPSGGLYIQNVVQGDSGEYACSATNNIDSVHATAFIIVQALPQFTVTPQDRVVIEGQTVDFQCEAKGNPPPVIAWTKGGSQLSVDRRHLVLSSGTLRISGVALHDQGQYECQAVNIIGSQKVVAHLTVQPRVTPVFASIPSDTTVEVGANVQLPCSSQGEPEPAITWNKDGVQVTESGKFHISPEGFLTINDVGPADAGRYECVARNTIGSASVSMVLSVNVPDVSRNGDPFVATSIVEAIATVDRAINSTRTHLFDSRPRSPNDLLALFRYPRDPYTVEQARAGEIFERTLQLIQEHVQHGLMVDLNGTSYHYNDLVSPQYLNLIANLSGCTAHRRVNNCSDMCFHQKYRTHDGTCNNLQHPMWGASLTAFERLLKSVYENGFNTPRGINPHRLYNGHALPMPRLVSTTLIGTETVTPDEQFTHMLMQWGQFLDHDLDSTVVALSQARFSDGQHCSNVCSNDPPCFSVMIPPNDSRARSGARCMFFVRSSPVCGSGMTSLLMNSVYPREQINQLTSYIDASNVYGSTEHEARSIRDLASHRGLLRQGIVQRSGKPLLPFATGPPTECMRDENESPIPCFLAGDHRANEQLGLTSMHTLWFREHNRIATELLKLNPHWDGDTIYYETRKIVGAEIQHITYQHWLPKILGEVGMRTLGEYHGYDPGINAGIFNAFATAAFRFGHTLVNPLLYRLDENFQPIAQDHLPLHKAFFSPFRIVNEGGIDPLLRGLFGVAGKMRVPSQLLNTELTERLFSMAHTVALDLAAINIQRGRDHGIPPYHDYRVYCNLSAAHTFEDLKNEIKNPEIREKLKRLYGSTLNIDLFPALVVEDLVPGSRLGPTLMCLLSTQFKRLRDGDRLWYENPGVFSPAQLTQIKQTSLARILCDNADNITRVQSDVFRVAEFPHGYGSCDEIPRVDLRVWQDCCEDCRTRGQFNAFSYHFRGRRSLEFSYQEDKPTKKTRPRKIPSVGRQGEHLSNSTSAFSTRSDASGTNDFREFVLEMQKTITDLRTQIKKLESRLSTTECVDAGGESHANNTKWKKDACTICECKDGQVTCFVEACPPATCAVPVNIPGACCPVCLQKRAEEKP.

Positions 1-26 (MAKRSRGPGRRCLLALVLFCAWGTLA) are cleaved as a signal peptide. The region spanning 27–63 (VVAQKPGAGCPSRCLCFRTTVRCMHLLLEAVPAVAPQ) is the LRRNT domain. 2 disulfide bridges follow: C36–C42 and C40–C49. LRR repeat units lie at residues 61–84 (APQT…AFRR), 85–108 (LRNL…AFED), 110–132 (ENLK…AFKG), 133–156 (LASL…SFQH), 157–180 (LPKL…TFNH), and 182–204 (ESMK…LWLA). The 53-residue stretch at 192–244 (NTLHCDCEILWLADLLKTYAESGNAQAAAICEYPRRIQGRSVATITPEELNCE) folds into the LRRCT domain. Intrachain disulfides connect C196-C243, C198-C222, C267-C317, C363-C412, C454-C502, and C546-C594. Ig-like C2-type domains follow at residues 246-332 (PRIT…QEVT), 342-428 (PTFV…AFII), 433-520 (PQFT…LTVQ), and 521-610 (PRVT…MVLS). N-linked (GlcNAc...) asparagine glycans are attached at residues N640, N699, N719, and N731. 4 disulfide bridges follow: C723/C885, C732/C748, C847/C857, and C851/C875. Heme b is bound at residue D826. H827 functions as the Proton acceptor in the catalytic mechanism. Residue D828 participates in Ca(2+) binding. N-linked (GlcNAc...) asparagine glycosylation is present at N865. 4 residues coordinate Ca(2+): T907, Y909, D911, and S913. The cysteines at positions 959 and 970 are disulfide-linked. A glycan (N-linked (GlcNAc...) asparagine) is linked at N964. Heme b contacts are provided by E980 and H1074. The stretch at 1151–1175 (ALDLAAINIQRGRDHGIPPYHDYRV) is one LRR 7 repeat. The residue at position 1176 (Y1176) is a Phosphotyrosine. Cystine bridges form between C1177/C1234 and C1275/C1301. N1178 carries N-linked (GlcNAc...) asparagine glycosylation. S1180 carries the post-translational modification Phosphoserine. An LRR 8 repeat occupies 1270-1291 (LARILCDNADNITRVQSDVFRV). N-linked (GlcNAc...) asparagine glycans are attached at residues N1280, N1368, and N1425. The segment at 1315-1411 (CCEDCRTRGQ…QIKKLESRLS (97 aa)) is required in homotrimerization. A disordered region spans residues 1342–1380 (YQEDKPTKKTRPRKIPSVGRQGEHLSNSTSAFSTRSDAS). Polar residues predominate over residues 1365–1380 (HLSNSTSAFSTRSDAS). A VWFC domain is found at 1413-1471 (TECVDAGGESHANNTKWKKDACTICECKDGQVTCFVEACPPATCAVPVNIPGACCPVCL).

It belongs to the peroxidase family. XPO subfamily. In terms of assembly, homotrimer; disulfide-linked. The homotrimer form is predominant. Homooligomer; disulfide-linked. Oligomerization occurs intracellularly before C-terminal proteolytic cleavage. Interacts with PXDNL; this interaction inhibits the peroxidase activity of PXDN. Ca(2+) serves as cofactor. Requires heme b as cofactor. Glycosylated. Four sites are completely N-glycosylated (Asn-640, Asn-731, Asn-865 and Asn-1425), whereas the others are found partially glycosylated. In terms of processing, processed by FURIN and the proteolytic processing largely depends on the peroxidase activity of PXDN. The proteolytic cleavage occurs after intracellular homotrimerization and releases into the extracellular matrix a large, catalytically active fragment and a smaller fragment consisting primarily of the C-terminal VWFC domain. The processing enhances both peroxidase activity and sulfilimine cross-links formation. Expressed at higher levels in heart, lung, ovary, spleen, intestine and placenta, and at lower levels in liver, colon, pancreas, kidney, thymus, skeletal muscle and prostate. Expressed in tumors such as melanoma, breast cancer, ovarian cancer and glioblastoma. A shorter form probably lacking the signal sequence is found in testis and in EB1 cells undergoing p53/TP53-dependent apoptosis.

It is found in the secreted. The protein resides in the extracellular space. It localises to the extracellular matrix. Its subcellular location is the endoplasmic reticulum. The protein localises to the cell surface. It is found in the basement membrane. It carries out the reaction L-lysyl-[collagen] + L-methionyl-[collagen] + H2O2 = [collagen]-L-lysyl-N-S-L-methionyl-[collagen] + 2 H2O + H(+). The catalysed reaction is bromide + H2O2 = hypobromite + H2O. It catalyses the reaction L-lysyl-[collagen] + L-methionyl-[collagen] + hypobromite = [collagen]-L-lysyl-N-S-L-methionyl-[collagen] + bromide + H2O + H(+). The enzyme catalyses L-tyrosyl-[protein] + bromide + H2O2 + H(+) = 3-bromo-L-tyrosyl-[protein] + 2 H2O. It carries out the reaction hypobromite + L-tyrosyl-[protein] + H(+) = 3-bromo-L-tyrosyl-[protein] + H2O. The hypobromous acid formation is activated by increasing nitrite concentrations and inhibited by increasing urate concentrations. Its function is as follows. Catalyzes the two-electron oxidation of bromide by hydrogen peroxide and generates hypobromite as a reactive intermediate which mediates the formation of sulfilimine cross-links between methionine and hydroxylysine residues within an uncross-linked collagen IV/COL4A1 NC1 hexamer. In turns, directly contributes to the collagen IV network-dependent fibronectin/FN and laminin assembly, which is required for full extracellular matrix (ECM)-mediated signaling. Thus, sulfilimine cross-links are essential for growth factor-induced cell proliferation and survival in endothelial cells, an event essential to basement membrane integrity. In addition, through the bromide oxidation, may promote tubulogenesis and induce angiogenesis through ERK1/2, Akt, and FAK pathways. Moreover brominates alpha2 collagen IV chain/COL4A2 at 'Tyr-1485' and leads to bromine enrichment of the basement membranes. In vitro, can also catalyze the two-electron oxidation of thiocyanate and iodide and these two substrates could effectively compete with bromide and thus inhibit the formation of sulfilimine bonds. Binds laminins. May play a role in the organization of eyeball structure and lens development during eye development. The polypeptide is Peroxidasin homolog (Homo sapiens (Human)).